Reading from the N-terminus, the 102-residue chain is Co-chaperonin GroES (102 aa).

This sequence belongs to the GroES chaperonin family. In terms of assembly, heptamer of 7 subunits arranged in a ring. Interacts with the chaperonin GroEL.

Its subcellular location is the cytoplasm. Functionally, together with the chaperonin GroEL, plays an essential role in assisting protein folding. The GroEL-GroES system forms a nano-cage that allows encapsulation of the non-native substrate proteins and provides a physical environment optimized to promote and accelerate protein folding. GroES binds to the apical surface of the GroEL ring, thereby capping the opening of the GroEL channel. The chain is Co-chaperonin GroES from Chlamydia trachomatis serovar D (strain ATCC VR-885 / DSM 19411 / UW-3/Cx).